The following is a 232-amino-acid chain: Orotidine 5'-phosphate decarboxylase (232 aa).

Residues aspartate 13, lysine 35, 62–71 (DLKFHDIPNT), threonine 121, arginine 182, glutamine 191, glycine 211, and arginine 212 each bind substrate. Lysine 64 functions as the Proton donor in the catalytic mechanism.

It belongs to the OMP decarboxylase family. Type 1 subfamily. As to quaternary structure, homodimer.

The catalysed reaction is orotidine 5'-phosphate + H(+) = UMP + CO2. Its pathway is pyrimidine metabolism; UMP biosynthesis via de novo pathway; UMP from orotate: step 2/2. In terms of biological role, catalyzes the decarboxylation of orotidine 5'-monophosphate (OMP) to uridine 5'-monophosphate (UMP). This is Orotidine 5'-phosphate decarboxylase from Acinetobacter baumannii (strain AB0057).